The chain runs to 218 residues: Probable transaldolase (218 aa).

Lys83 functions as the Schiff-base intermediate with substrate in the catalytic mechanism.

The protein belongs to the transaldolase family. Type 3B subfamily.

It localises to the cytoplasm. The enzyme catalyses D-sedoheptulose 7-phosphate + D-glyceraldehyde 3-phosphate = D-erythrose 4-phosphate + beta-D-fructose 6-phosphate. It functions in the pathway carbohydrate degradation; pentose phosphate pathway; D-glyceraldehyde 3-phosphate and beta-D-fructose 6-phosphate from D-ribose 5-phosphate and D-xylulose 5-phosphate (non-oxidative stage): step 2/3. In terms of biological role, transaldolase is important for the balance of metabolites in the pentose-phosphate pathway. This Kosmotoga olearia (strain ATCC BAA-1733 / DSM 21960 / TBF 19.5.1) protein is Probable transaldolase.